Here is a 313-residue protein sequence, read N- to C-terminus: tRNA dimethylallyltransferase (313 aa).

ATP is bound at residue 11-18; it reads GPTASGKT. 13-18 lines the substrate pocket; sequence TASGKT. Interaction with substrate tRNA stretches follow at residues 36–39, 160–164, and 241–246; these read DSAL, QRINR, and RCVGYR.

Belongs to the IPP transferase family. As to quaternary structure, monomer. Mg(2+) is required as a cofactor.

The enzyme catalyses adenosine(37) in tRNA + dimethylallyl diphosphate = N(6)-dimethylallyladenosine(37) in tRNA + diphosphate. In terms of biological role, catalyzes the transfer of a dimethylallyl group onto the adenine at position 37 in tRNAs that read codons beginning with uridine, leading to the formation of N6-(dimethylallyl)adenosine (i(6)A). This is tRNA dimethylallyltransferase from Haemophilus ducreyi (strain 35000HP / ATCC 700724).